Reading from the N-terminus, the 374-residue chain is MTAAIQRRLDLSEPPALAQRTELHPELNRAHVRFVGLGKTYDGKQGTVAALQGIDLAIQRGEVFGIIGRSGAGKSSLIRTINRLEQPTSGRVLIDQVDIGEYDEDRLVALRRRIGMIFQHFNLMSAKTVWQNVELPLKVAGVPKEQREKKVRELLELVGLQAKHTAYPAQLSGGQKQRVGIARALVHDPDILLCDEATSALDPETTQSILGLLREINKRLGLTIMLITHEMAVIREICDRVVVLEHGRIVEQGPVWEVFGNPQHEVSQTLLAPLQHALPEELQSRLQVQPSSSDASVVLRLQFTGSQQDEPDLAALFAALGGRVKLLQGGVERIQGHALGQLLLAVAGSQLNAEQLRERAGQWAQRTEVLGYVV.

One can recognise an ABC transporter domain in the interval 32–271 (VRFVGLGKTY…PQHEVSQTLL (240 aa)). Residue 68–75 (GRSGAGKS) participates in ATP binding.

This sequence belongs to the ABC transporter superfamily. Methionine importer (TC 3.A.1.24) family. In terms of assembly, the complex is composed of two ATP-binding proteins (MetN), two transmembrane proteins (MetI) and a solute-binding protein (MetQ).

The protein resides in the cell inner membrane. It carries out the reaction L-methionine(out) + ATP + H2O = L-methionine(in) + ADP + phosphate + H(+). The catalysed reaction is D-methionine(out) + ATP + H2O = D-methionine(in) + ADP + phosphate + H(+). Functionally, part of the ABC transporter complex MetNIQ involved in methionine import. Responsible for energy coupling to the transport system. This chain is Methionine import ATP-binding protein MetN 2, found in Pseudomonas fluorescens (strain Pf0-1).